A 535-amino-acid polypeptide reads, in one-letter code: High affinity immunoglobulin alpha and immunoglobulin mu Fc receptor (535 aa).

A signal peptide spans methionine 1–serine 35. At methionine 36–arginine 455 the chain is on the extracellular side. The mediates immunoglobulin Fc fragment-binding stretch occupies residues glycine 95–tryptophan 117. The Ig-like V-type domain maps to glycine 95 to threonine 189. A disulfide bridge connects residues cysteine 102 and cysteine 173. N-linked (GlcNAc...) asparagine glycosylation is present at asparagine 187. Disordered stretches follow at residues alanine 201 to glutamate 360 and glutamate 405 to valine 430. 2 stretches are compositionally biased toward low complexity: residues proline 208–glycine 220 and threonine 241–serine 253. A compositionally biased stretch (polar residues) spans lysine 291–glutamate 328. The span at aspartate 330–arginine 346 shows a compositional bias: basic and acidic residues. Residues leucine 413 to serine 429 are compositionally biased toward polar residues. Residues isoleucine 456–lysine 476 form a helical membrane-spanning segment. The Cytoplasmic portion of the chain corresponds to arginine 477 to proline 535. The segment at leucine 507–proline 535 is disordered. Residues asparagine 513 to valine 528 are compositionally biased toward polar residues.

As to quaternary structure, interacts with IGHM; this interaction facilitates the endocytosis of IgM-coated microbes and IgM-antigen immune complexes. N-glycosylated. In terms of tissue distribution, expressed in several tissues including thymus, spleen, liver, kidney, small and large intestine, testis and placenta. Expressed by oligodendrocytes, B-cells and macrophages but not granulocytes, T-cells or NK cells (at protein level).

The protein resides in the cell membrane. Functions as a receptor for the Fc fragment of IgA and IgM. Binds IgA and IgM with high affinity and mediates their endocytosis. May function in the immune response to microbes mediated by IgA and IgM. The chain is High affinity immunoglobulin alpha and immunoglobulin mu Fc receptor (Fcamr) from Mus musculus (Mouse).